The chain runs to 436 residues: tRNA-2-methylthio-N(6)-dimethylallyladenosine synthase (436 aa).

The region spanning 5–121 (RKLFIKTYGC…LPDMLDRTEG (117 aa)) is the MTTase N-terminal domain. [4Fe-4S] cluster is bound by residues cysteine 14, cysteine 50, cysteine 84, cysteine 158, cysteine 162, and cysteine 165. Residues 144 to 374 (ATRGPAAFLT…TEQQRAAQMA (231 aa)) enclose the Radical SAM core domain. A TRAM domain is found at 373–435 (MAMVGREVGV…PNSLAGERLG (63 aa)).

This sequence belongs to the methylthiotransferase family. MiaB subfamily. In terms of assembly, monomer. It depends on [4Fe-4S] cluster as a cofactor.

It localises to the cytoplasm. The enzyme catalyses N(6)-dimethylallyladenosine(37) in tRNA + (sulfur carrier)-SH + AH2 + 2 S-adenosyl-L-methionine = 2-methylsulfanyl-N(6)-dimethylallyladenosine(37) in tRNA + (sulfur carrier)-H + 5'-deoxyadenosine + L-methionine + A + S-adenosyl-L-homocysteine + 2 H(+). Functionally, catalyzes the methylthiolation of N6-(dimethylallyl)adenosine (i(6)A), leading to the formation of 2-methylthio-N6-(dimethylallyl)adenosine (ms(2)i(6)A) at position 37 in tRNAs that read codons beginning with uridine. This Cereibacter sphaeroides (strain ATCC 17029 / ATH 2.4.9) (Rhodobacter sphaeroides) protein is tRNA-2-methylthio-N(6)-dimethylallyladenosine synthase.